Reading from the N-terminus, the 465-residue chain is Mothers against decapentaplegic homolog 1 (465 aa).

N-acetylmethionine is present on Met1. An MH1 domain is found at 12–136 (PAVKRLLGWK…YKRVESPVLP (125 aa)). Residues Cys64, Cys109, Cys121, and His126 each contribute to the Zn(2+) site. The interval 162–246 (NEPHMPLNAT…DGSQPMDTNM (85 aa)) is disordered. The segment covering 179-212 (PNSHPFPHSPNSSYPNSPGGSSSTYPHSPTSSDP) has biased composition (low complexity). Over residues 221-232 (DTPPPAYLPPED) the composition is skewed to pro residues. An MH2 domain is found at 271–465 (WCSIVYYELN…SPHNPISSVS (195 aa)). The residue at position 322 (Thr322) is a Phosphothreonine; by MINK1, TNIK and MAP4K4. The tract at residues 418–428 (KGWGAEYHRQD) is L3 loop. Residues Ser463 and Ser465 each carry the phosphoserine modification.

It belongs to the dwarfin/SMAD family. In terms of assembly, found in a complex with SMAD4 and YY1. Interacts with HGS, NANOG and ZCCHC12. Upon C-terminus phosphorylation: forms trimers with another SMAD1 and the co-SMAD SMAD4. Interacts with PEBP2-alpha subunit, CREB-binding protein (CBP), p300, SMURF1, SMURF2, USP15 and HOXC8. Associates with ZNF423 or ZNF521 in response to BMP2 leading to activate transcription of BMP target genes. Interacts with SKOR1. Interacts (via MH2 domain) with LEMD3. Binding to LEMD3 results in at least a partial reduction of receptor-mediated phosphorylation. Forms a ternary complex with PSMB4 and OAZ1 before PSMB4 is incorporated into the 20S proteasome. Interacts (via MH2 domain) with FAM83G (via MH2 domain); in a SMAD4-independent manner. Interacts with ZC3H3. Interacts with TMEM119. Interacts (via MH1 and MH2 domains) with ZNF8. Interacts with RANBP3L; the interaction increases when SMAD1 is not phosphorylated and mediates SMAD1 nuclear export. Interacts with EGR1; this interaction inhibits SMAD1 dephosphorylation. Interacts with SMAD6. Interacts with YAP1. Interacts with MTMR4; negatively regulates BMP signaling through SMAD1 dephosphorylation and retention in endosomes. Post-translationally, phosphorylation of the C-terminal SVS motif by BMP type 1 receptor kinase activates SMAD1 by promoting dissociation from the receptor and trimerization with SMAD4. Phosphorylation by ERK2 MAP kinase in response to EGF or HGF prevents SMAD1 nuclear accumulation and transcriptional activity in response to BMP. Dephosphorylation, probably by PPM1A, induces its export from the nucleus to the cytoplasm. Dephosphorylation is inhibited by association with EGR1. Phosphorylation by CDK8/9 creates binding sites for YAP1, and subsequent phosphorylation by GSK3 switches off YAP1 binding and adds binding sites for SMURF1. In terms of processing, ubiquitinated by SMAD-specific E3 ubiquitin ligase SMURF1, leading to its degradation. Monoubiquitinated, leading to prevent DNA-binding. Deubiquitination by USP15 alleviates inhibition and promotes activation of TGF-beta target genes. Dephosphorylation, probably by PPM1A, induces its export from the nucleus to the cytoplasm. Phospho-SMAD1 is ubiquitinated by CHIP leading to disruption of the SMAD1-SMAD4 complex. In terms of tissue distribution, ubiquitous.

It is found in the cytoplasm. It localises to the nucleus. Its function is as follows. Transcriptional modulator that plays a role in various cellular processes, including embryonic development, cell differentiation, and tissue homeostasis. Upon BMP ligand binding to their receptors at the cell surface, is phosphorylated by activated type I BMP receptors (BMPRIs) and associates with SMAD4 to form a heteromeric complex which translocates into the nucleus acting as transcription factor. In turn, the hetero-trimeric complex recognizes cis-regulatory elements containing Smad Binding Elements (SBEs) to modulate the outcome of the signaling network. SMAD1/OAZ1/PSMB4 complex mediates the degradation of the CREBBP/EP300 repressor SNIP1. Positively regulates BMP4-induced expression of odontogenic development regulator MSX1 following IPO7-mediated nuclear import. The polypeptide is Mothers against decapentaplegic homolog 1 (Smad1) (Mus musculus (Mouse)).